We begin with the raw amino-acid sequence, 475 residues long: Ribulose bisphosphate carboxylase large chain (475 aa).

Positions 1–2 are excised as a propeptide; sequence MS. The residue at position 3 (P3) is an N-acetylproline. At K14 the chain carries N6,N6,N6-trimethyllysine. Residues N123 and T173 each coordinate substrate. Catalysis depends on K175, which acts as the Proton acceptor. Position 177 (K177) interacts with substrate. Mg(2+) is bound by residues K201, D203, and E204. N6-carboxylysine is present on K201. Residue H294 is the Proton acceptor of the active site. Substrate is bound by residues R295, H327, and S379.

Belongs to the RuBisCO large chain family. Type I subfamily. As to quaternary structure, heterohexadecamer of 8 large chains and 8 small chains; disulfide-linked. The disulfide link is formed within the large subunit homodimers. Requires Mg(2+) as cofactor. In terms of processing, the disulfide bond which can form in the large chain dimeric partners within the hexadecamer appears to be associated with oxidative stress and protein turnover.

It localises to the plastid. It is found in the chloroplast. It catalyses the reaction 2 (2R)-3-phosphoglycerate + 2 H(+) = D-ribulose 1,5-bisphosphate + CO2 + H2O. The catalysed reaction is D-ribulose 1,5-bisphosphate + O2 = 2-phosphoglycolate + (2R)-3-phosphoglycerate + 2 H(+). Its function is as follows. RuBisCO catalyzes two reactions: the carboxylation of D-ribulose 1,5-bisphosphate, the primary event in carbon dioxide fixation, as well as the oxidative fragmentation of the pentose substrate in the photorespiration process. Both reactions occur simultaneously and in competition at the same active site. In Liquidambar styraciflua (Sweetgum tree), this protein is Ribulose bisphosphate carboxylase large chain.